Reading from the N-terminus, the 443-residue chain is Ribosomal protein uS12 methylthiotransferase RimO (443 aa).

An MTTase N-terminal domain is found at 5–115 (PNIGFISLGC…VMKHVHKYVP (111 aa)). Residues Cys14, Cys50, Cys79, Cys147, Cys151, and Cys154 each contribute to the [4Fe-4S] cluster site. The region spanning 133–374 (LTPKHYAYLK…MQVQQRISAA (242 aa)) is the Radical SAM core domain. The TRAM domain maps to 377–443 (QQKVGKTLAV…ADEYDLWGTC (67 aa)).

Belongs to the methylthiotransferase family. RimO subfamily. Requires [4Fe-4S] cluster as cofactor.

The protein localises to the cytoplasm. It catalyses the reaction L-aspartate(89)-[ribosomal protein uS12]-hydrogen + (sulfur carrier)-SH + AH2 + 2 S-adenosyl-L-methionine = 3-methylsulfanyl-L-aspartate(89)-[ribosomal protein uS12]-hydrogen + (sulfur carrier)-H + 5'-deoxyadenosine + L-methionine + A + S-adenosyl-L-homocysteine + 2 H(+). Functionally, catalyzes the methylthiolation of an aspartic acid residue of ribosomal protein uS12. This Actinobacillus pleuropneumoniae serotype 5b (strain L20) protein is Ribosomal protein uS12 methylthiotransferase RimO.